The following is a 284-amino-acid chain: Prolyl 4-hydroxylase subunit alpha (284 aa).

Residues 169–284 enclose the Fe2OG dioxygenase domain; the sequence is NFNSIKTQTQ…PRIAITTWIY (116 aa). Fe cation-binding residues include H191, D193, and H266. R276 lines the 2-oxoglutarate pocket.

The protein belongs to the P4HA family. Heterotetramer of two alpha-1 chains and two beta chains (the beta chain is the multi-functional PDI). Fe(2+) serves as cofactor. L-ascorbate is required as a cofactor.

The protein resides in the cytoplasm. The enzyme catalyses L-prolyl-[Skp1 protein] + 2-oxoglutarate + O2 = trans-4-hydroxy-L-prolyl-[Skp1 protein] + succinate + CO2. Its activity is regulated as follows. Inhibited by the prolyl-hydroxylase inhibitors alpha,alpha'-dipyridyl and ethyl 3,4-dihydroxybenzoate. Catalyzes the post-translational formation of 4-hydroxyproline. Probably hydroxylates skp1 on Pro-143. This Dictyostelium discoideum (Social amoeba) protein is Prolyl 4-hydroxylase subunit alpha (phyA).